Here is a 54-residue protein sequence, read N- to C-terminus: UPF0391 membrane protein Daro_2080 (54 aa).

2 consecutive transmembrane segments (helical) span residues 5 to 25 (AIVF…GIAA) and 30 to 50 (IAKI…VMGF).

Belongs to the UPF0391 family.

It localises to the cell membrane. The polypeptide is UPF0391 membrane protein Daro_2080 (Dechloromonas aromatica (strain RCB)).